A 317-amino-acid polypeptide reads, in one-letter code: tRNA uridine(34) hydroxylase (317 aa).

A Rhodanese domain is found at 123–217 (EDDDTIVIDA…YGKDPETKGE (95 aa)). The active-site Cysteine persulfide intermediate is cysteine 177.

The protein belongs to the TrhO family.

It catalyses the reaction uridine(34) in tRNA + AH2 + O2 = 5-hydroxyuridine(34) in tRNA + A + H2O. Functionally, catalyzes oxygen-dependent 5-hydroxyuridine (ho5U) modification at position 34 in tRNAs. This chain is tRNA uridine(34) hydroxylase, found in Staphylococcus carnosus (strain TM300).